The following is a 131-amino-acid chain: Large ribosomal subunit protein bL19 (131 aa).

The interval 110–131 is disordered; the sequence is KSARIAERTDDRAKKAKATAAE. Residues 113–122 are compositionally biased toward basic and acidic residues; it reads RIAERTDDRA.

The protein belongs to the bacterial ribosomal protein bL19 family.

Its function is as follows. This protein is located at the 30S-50S ribosomal subunit interface and may play a role in the structure and function of the aminoacyl-tRNA binding site. This is Large ribosomal subunit protein bL19 from Azorhizobium caulinodans (strain ATCC 43989 / DSM 5975 / JCM 20966 / LMG 6465 / NBRC 14845 / NCIMB 13405 / ORS 571).